A 794-amino-acid polypeptide reads, in one-letter code: uncharacterized protein (794 aa).

The N-terminal stretch at 1-22 is a signal peptide; that stretch reads MKFKYGAIVFSGLLGVSAILAA. A lipid anchor (N-palmitoyl cysteine) is attached at Cys23. Cys23 is lipidated: S-diacylglycerol cysteine. 2 stretches are compositionally biased toward polar residues: residues 182–200 and 245–261; these read TSVQRTADSGSGTTNNNGV and QMSTQTQPTDNSNDANQ. Disordered regions lie at residues 182–208, 222–261, 474–529, 566–594, and 737–757; these read TSVQRTADSGSGTTNNNGVTKPLKIDK, NKAKENGKKTSSSRRKRNLSSSKQMSTQTQPTDNSNDANQ, FKIK…GKNG, SAAKKEDKKSGESTTEQTQIQSKSVTEQK, and KNEKKEGSDQKDSKSNGRGKQ. Residues 475-501 show a composition bias toward low complexity; sequence KIKSSNKSKSSSSKSSTKAETGKTSGG. Residues 511–526 show a composition bias toward polar residues; that stretch reads GAQNQGKKGEGAQNQG. Positions 567-576 are enriched in basic and acidic residues; that stretch reads AAKKEDKKSG. Residues 577 to 593 are compositionally biased toward polar residues; the sequence is ESTTEQTQIQSKSVTEQ. Over residues 737-751 the composition is skewed to basic and acidic residues; it reads KNEKKEGSDQKDSKS.

Belongs to the MG185/MG260 family.

It localises to the cell membrane. This is an uncharacterized protein from Mycoplasma pneumoniae (strain ATCC 29342 / M129 / Subtype 1) (Mycoplasmoides pneumoniae).